The primary structure comprises 193 residues: MSLVPYVIEQTSRGERNYDIYSRLLKDRIIFLGEEVNETTASLVVAQLLFLESEDPNKDIHLYINSPGGMVTAGLAIYDTMQYIKCDVSTICIGLAASMGAFLLAGGAKGKRYALPNAEIMIHQPSGGAKGQATEIQIAAENILKTKKRLNEILAANTGKPYETIAADTERDNYMSAQEAAEYGLIDSVITNR.

Serine 98 functions as the Nucleophile in the catalytic mechanism. Histidine 123 is an active-site residue.

The protein belongs to the peptidase S14 family. Fourteen ClpP subunits assemble into 2 heptameric rings which stack back to back to give a disk-like structure with a central cavity, resembling the structure of eukaryotic proteasomes.

The protein resides in the cytoplasm. It carries out the reaction Hydrolysis of proteins to small peptides in the presence of ATP and magnesium. alpha-casein is the usual test substrate. In the absence of ATP, only oligopeptides shorter than five residues are hydrolyzed (such as succinyl-Leu-Tyr-|-NHMec, and Leu-Tyr-Leu-|-Tyr-Trp, in which cleavage of the -Tyr-|-Leu- and -Tyr-|-Trp bonds also occurs).. Its function is as follows. Cleaves peptides in various proteins in a process that requires ATP hydrolysis. Has a chymotrypsin-like activity. Plays a major role in the degradation of misfolded proteins. The chain is ATP-dependent Clp protease proteolytic subunit from Agathobacter rectalis (strain ATCC 33656 / DSM 3377 / JCM 17463 / KCTC 5835 / VPI 0990) (Eubacterium rectale).